The following is a 1323-amino-acid chain: Sister chromatid cohesion protein PDS5 homolog A-B (1323 aa).

The HEAT repeat unit spans residues 385 to 421; the sequence is FLVNDQLLGFVRERTLDKRWRVRKEAMMGLAQLYKKY. Positions 1138–1323 are disordered; it reads PLNATGRRPY…TAQRQIDLHR (186 aa). Residues 1153–1165 are compositionally biased toward low complexity; the sequence is SEISNNVSINSES. Polar residues-rich tracts occupy residues 1166–1176 and 1210–1220; these read DASVANRQSSE and LDQTAPSNTGT. The segment covering 1235 to 1246 has biased composition (basic and acidic residues); that stretch reads NIRKESEEKKVD.

As to quaternary structure, interacts with the cohesin complex. Binds chromatin in a cohesin-dependent manner.

Its subcellular location is the nucleus. May regulate sister chromatid cohesion during mitosis and couple it to DNA replication. This Xenopus laevis (African clawed frog) protein is Sister chromatid cohesion protein PDS5 homolog A-B (pds5a-b).